We begin with the raw amino-acid sequence, 244 residues long: Ferredoxin--NADP reductase B (244 aa).

The 103-residue stretch at 4–106 (AEPFEARLVA…VGPHGLFTRD (103 aa)) folds into the FAD-binding FR-type domain. FAD-binding positions include 55 to 58 (RAYS) and Thr-120.

Belongs to the ferredoxin--NADP reductase type 1 family. Requires FAD as cofactor.

It catalyses the reaction 2 reduced [4Fe-4S]-[ferredoxin] + NADP(+) + H(+) = 2 oxidized [4Fe-4S]-[ferredoxin] + NADPH. In terms of biological role, transports electrons between NADPH and ferredoxin. Can transfer electrons to ferredoxins Fdx2 and Fdx8. Prefers NADPH to NADH. This is Ferredoxin--NADP reductase B from Sorangium cellulosum (strain So ce56) (Polyangium cellulosum (strain So ce56)).